We begin with the raw amino-acid sequence, 308 residues long: tRNA dimethylallyltransferase (308 aa).

Residue 11–18 participates in ATP binding; sequence GPTGIGKT. 13–18 is a binding site for substrate; the sequence is TGIGKT. The interval 36-39 is interaction with substrate tRNA; the sequence is DSMQ.

This sequence belongs to the IPP transferase family. Monomer. Mg(2+) serves as cofactor.

It carries out the reaction adenosine(37) in tRNA + dimethylallyl diphosphate = N(6)-dimethylallyladenosine(37) in tRNA + diphosphate. In terms of biological role, catalyzes the transfer of a dimethylallyl group onto the adenine at position 37 in tRNAs that read codons beginning with uridine, leading to the formation of N6-(dimethylallyl)adenosine (i(6)A). The sequence is that of tRNA dimethylallyltransferase from Lactobacillus gasseri (strain ATCC 33323 / DSM 20243 / BCRC 14619 / CIP 102991 / JCM 1131 / KCTC 3163 / NCIMB 11718 / NCTC 13722 / AM63).